Here is a 448-residue protein sequence, read N- to C-terminus: Phosphoglucosamine mutase (448 aa).

S101 serves as the catalytic Phosphoserine intermediate. Mg(2+) is bound by residues S101, D241, D243, and D245. Position 101 is a phosphoserine (S101).

This sequence belongs to the phosphohexose mutase family. Requires Mg(2+) as cofactor. In terms of processing, activated by phosphorylation.

The catalysed reaction is alpha-D-glucosamine 1-phosphate = D-glucosamine 6-phosphate. Catalyzes the conversion of glucosamine-6-phosphate to glucosamine-1-phosphate. The chain is Phosphoglucosamine mutase from Macrococcus caseolyticus (strain JCSC5402) (Macrococcoides caseolyticum).